The following is a 97-amino-acid chain: Large ribosomal subunit protein uL23 (97 aa).

The protein belongs to the universal ribosomal protein uL23 family. In terms of assembly, part of the 50S ribosomal subunit. Contacts protein L29, and trigger factor when it is bound to the ribosome.

Functionally, one of the early assembly proteins it binds 23S rRNA. One of the proteins that surrounds the polypeptide exit tunnel on the outside of the ribosome. Forms the main docking site for trigger factor binding to the ribosome. The sequence is that of Large ribosomal subunit protein uL23 from Anaeromyxobacter dehalogenans (strain 2CP-1 / ATCC BAA-258).